The sequence spans 555 residues: DNA repair and recombination protein rhm52 (555 aa).

The DNA-binding element occupies 148-152 (KRALR). 2 disordered regions span residues 197–232 (VVAE…DSFD) and 251–555 (HPDE…MKLN). Residues 260–276 (NSHASGSSGNTGASTTN) show a composition bias toward low complexity. 2 stretches are compositionally biased toward polar residues: residues 283–300 (SGNQ…SRMN) and 312–334 (TPNH…QNNH). 2 stretches are compositionally biased toward low complexity: residues 354-375 (NNNN…GPQQ) and 382-404 (NGAA…AVAR). Polar residues predominate over residues 468–478 (DNPSNNAGNGV). Low complexity predominate over residues 479-490 (QNQPQKPQPSQQ). The segment covering 491 to 500 (RGSILNPQFD) has biased composition (polar residues). The span at 536–547 (PNGTSNGNGTPG) shows a compositional bias: low complexity.

It belongs to the RAD52 family. As to quaternary structure, part of a complex that includes RAD51, RAD52 and RAD59.

It is found in the nucleus. In terms of biological role, involved in DNA double-strand break (DSB) repair and recombination. Promotes the annealing of complementary single-stranded DNA and by stimulation of the RAD51 recombinase. This Pyricularia oryzae (strain 70-15 / ATCC MYA-4617 / FGSC 8958) (Rice blast fungus) protein is DNA repair and recombination protein rhm52 (RHM52).